We begin with the raw amino-acid sequence, 327 residues long: Meiotic coiled-coil protein 6 (327 aa).

Residues 66 to 188 are a coiled coil; sequence DAFERDSTQR…TETKEMNKIK (123 aa). Basic and acidic residues predominate over residues 175–199; that stretch reads RRMETETKEMNKIKPKNDSESDRFK. The interval 175-234 is disordered; it reads RRMETETKEMNKIKPKNDSESDRFKRNSQSLSQQSPLLDVHSPDNSNHRTMLNINNSSPI. Low complexity predominate over residues 202–212; it reads SQSLSQQSPLL. The span at 217–232 shows a compositional bias: polar residues; that stretch reads PDNSNHRTMLNINNSS. Residues 243-297 adopt a coiled-coil conformation; sequence NEVKNRISRLQKTFADLENQHHSFQQICQTLRKRLENDSSTTKQRLSKLEEIIRN.

Interacts with alp4, kms1 and mbo1.

It is found in the nucleus. The protein resides in the cytoplasm. Its subcellular location is the cytoskeleton. The protein localises to the microtubule organizing center. It localises to the spindle pole body. Has a role in meiotic nuclear oscillation and recombination. Required to remodel astral microtubules into the 'horsetail' astral array maintaining the 'horsetail' nuclear movement. Promotes homologous paring of chromosomes during this movement. The chain is Meiotic coiled-coil protein 6 (mcp6) from Schizosaccharomyces pombe (strain 972 / ATCC 24843) (Fission yeast).